Reading from the N-terminus, the 473-residue chain is Siroheme synthase (473 aa).

Residues 1 to 203 (MQYLPIFTKL…GDTQAAEQQL (203 aa)) are precorrin-2 dehydrogenase /sirohydrochlorin ferrochelatase. Residues 22 to 23 (DV) and 43 to 44 (PK) each bind NAD(+). S128 carries the phosphoserine modification. The tract at residues 215-473 (GEVYVVGAGP…SFAQPLTDVA (259 aa)) is uroporphyrinogen-III C-methyltransferase. P224 lines the S-adenosyl-L-methionine pocket. The active-site Proton acceptor is the D247. The Proton donor role is filled by K269. Residues 300 to 302 (GGD), I305, 330 to 331 (TA), M382, and G411 each bind S-adenosyl-L-methionine.

In the N-terminal section; belongs to the precorrin-2 dehydrogenase / sirohydrochlorin ferrochelatase family. This sequence in the C-terminal section; belongs to the precorrin methyltransferase family.

The catalysed reaction is uroporphyrinogen III + 2 S-adenosyl-L-methionine = precorrin-2 + 2 S-adenosyl-L-homocysteine + H(+). The enzyme catalyses precorrin-2 + NAD(+) = sirohydrochlorin + NADH + 2 H(+). It catalyses the reaction siroheme + 2 H(+) = sirohydrochlorin + Fe(2+). The protein operates within cofactor biosynthesis; adenosylcobalamin biosynthesis; precorrin-2 from uroporphyrinogen III: step 1/1. Its pathway is cofactor biosynthesis; adenosylcobalamin biosynthesis; sirohydrochlorin from precorrin-2: step 1/1. It functions in the pathway porphyrin-containing compound metabolism; siroheme biosynthesis; precorrin-2 from uroporphyrinogen III: step 1/1. It participates in porphyrin-containing compound metabolism; siroheme biosynthesis; siroheme from sirohydrochlorin: step 1/1. The protein operates within porphyrin-containing compound metabolism; siroheme biosynthesis; sirohydrochlorin from precorrin-2: step 1/1. Its function is as follows. Multifunctional enzyme that catalyzes the SAM-dependent methylations of uroporphyrinogen III at position C-2 and C-7 to form precorrin-2 via precorrin-1. Then it catalyzes the NAD-dependent ring dehydrogenation of precorrin-2 to yield sirohydrochlorin. Finally, it catalyzes the ferrochelation of sirohydrochlorin to yield siroheme. The sequence is that of Siroheme synthase from Pseudoalteromonas translucida (strain TAC 125).